A 325-amino-acid polypeptide reads, in one-letter code: Fructose-1,6-bisphosphatase class 1 (325 aa).

Mg(2+) contacts are provided by E84, D103, L105, and D106. Residues 106 to 109, N196, and K262 contribute to the substrate site; that span reads DGSS. E268 serves as a coordination point for Mg(2+).

The protein belongs to the FBPase class 1 family. Homotetramer. Mg(2+) is required as a cofactor.

The protein resides in the cytoplasm. It catalyses the reaction beta-D-fructose 1,6-bisphosphate + H2O = beta-D-fructose 6-phosphate + phosphate. It functions in the pathway carbohydrate biosynthesis; gluconeogenesis. The protein is Fructose-1,6-bisphosphatase class 1 of Shewanella oneidensis (strain ATCC 700550 / JCM 31522 / CIP 106686 / LMG 19005 / NCIMB 14063 / MR-1).